We begin with the raw amino-acid sequence, 688 residues long: Probable transcription factor gsfR1 (688 aa).

Positions 1-16 (MSDGPETAEGDTDDAV) are enriched in acidic residues. The disordered stretch occupies residues 1–95 (MSDGPETAEG…TPVSSRGSIA (95 aa)). The span at 24-36 (RVASESSARSQPR) shows a compositional bias: polar residues. Basic and acidic residues predominate over residues 58–75 (EHSKEKNVSRRLPTEKTP).

Its subcellular location is the nucleus. Probable transcription factor that regulates expression of the gene cluster that mediates the biosynthesis of Griseofulvin, an important antifungal drug that has been in use for a long time for treating dermatophyte infections. This is Probable transcription factor gsfR1 from Penicillium aethiopicum.